Here is a 132-residue protein sequence, read N- to C-terminus: Small ribosomal subunit protein uS8 (132 aa).

This sequence belongs to the universal ribosomal protein uS8 family. Part of the 30S ribosomal subunit. Contacts proteins S5 and S12.

One of the primary rRNA binding proteins, it binds directly to 16S rRNA central domain where it helps coordinate assembly of the platform of the 30S subunit. The sequence is that of Small ribosomal subunit protein uS8 from Afipia carboxidovorans (strain ATCC 49405 / DSM 1227 / KCTC 32145 / OM5) (Oligotropha carboxidovorans).